The chain runs to 461 residues: Tubulin gamma-2 chain (461 aa).

Position 142-148 (142-148 (AGGTGSG)) interacts with GTP.

The protein belongs to the tubulin family.

It is found in the cytoplasm. The protein resides in the cytoskeleton. Its subcellular location is the microtubule organizing center. The protein localises to the centrosome. Functionally, tubulin is the major constituent of microtubules. The gamma chain is found at microtubule organizing centers (MTOC) such as the spindle poles or the centrosome, suggesting that it is involved in the minus-end nucleation of microtubule assembly. The polypeptide is Tubulin gamma-2 chain (Euplotoides octocarinatus (Freshwater ciliate)).